The sequence spans 153 residues: Superoxide dismutase [Cu-Zn] (153 aa).

Cu cation is bound by residues His45, His47, and His62. Cys56 and Cys145 are oxidised to a cystine. Residues His62, His70, His79, and Asp82 each contribute to the Zn(2+) site. Cu cation is bound at residue His119.

The protein belongs to the Cu-Zn superoxide dismutase family. Homodimer. The cofactor is Cu cation. Zn(2+) serves as cofactor.

It localises to the cytoplasm. It carries out the reaction 2 superoxide + 2 H(+) = H2O2 + O2. Its function is as follows. Destroys radicals which are normally produced within the cells and which are toxic to biological systems. This Chymomyza amoena protein is Superoxide dismutase [Cu-Zn] (Sod).